Consider the following 449-residue polypeptide: MKIQDFKNKKVMVFGWARSGKAAAQRLVELSAIVTVVNGGAFDTDETIYQKLLAAGVTFINHDDDQAIDKSFDFLVKNPGIPYETAIVKKALVLDIPVLTEVEVALSSFDGRLIAVTGSNGKTTTTSLIRDMLKASGQTVTTAGNIGTPVSEVVGPLTSQDTLLLELSSFQLMGLPDIKPDIALITNIFANHLDYHGDRAHYVAAKYQITKNQTANQKLILNADGADTPDFAAKTQAQVVLFSRDNSSDMAWTDGHDLIIEGEHVMPLTAIKLVGPHNLENILAAITVSKIAGVTNEAIKSVLEVFGGVPHRLQYLLTENGVRYYNDSKATDIEATQTALDSFHEPTIWLAGGLDRGDDLTRLIPNLSHVKLVIAFGETQQKVVAIARQAHKPVITVTSVKEAVPVAISSSSAGDVVLLSPAAASWDQYPNFEVRGDEFVNELKENLGV.

118–124 is an ATP binding site; it reads GSNGKTT.

This sequence belongs to the MurCDEF family.

It is found in the cytoplasm. It catalyses the reaction UDP-N-acetyl-alpha-D-muramoyl-L-alanine + D-glutamate + ATP = UDP-N-acetyl-alpha-D-muramoyl-L-alanyl-D-glutamate + ADP + phosphate + H(+). The protein operates within cell wall biogenesis; peptidoglycan biosynthesis. In terms of biological role, cell wall formation. Catalyzes the addition of glutamate to the nucleotide precursor UDP-N-acetylmuramoyl-L-alanine (UMA). This is UDP-N-acetylmuramoylalanine--D-glutamate ligase from Leuconostoc citreum (strain KM20).